The following is a 47-amino-acid chain: Large ribosomal subunit protein bL34 (47 aa).

Composition is skewed to basic residues over residues 1–22 (MAKGKRTFQPNNRRRSRVHGFR) and 36–47 (ARRRKGRKSLTA). The interval 1-47 (MAKGKRTFQPNNRRRSRVHGFRSRMSTRAGRAIVSARRRKGRKSLTA) is disordered.

The protein belongs to the bacterial ribosomal protein bL34 family.

In Corynebacterium kroppenstedtii (strain DSM 44385 / JCM 11950 / CIP 105744 / CCUG 35717), this protein is Large ribosomal subunit protein bL34.